Consider the following 386-residue polypeptide: Succinate--CoA ligase [ADP-forming] subunit beta (386 aa).

The ATP-grasp domain maps to 9 to 244; it reads KEILKQYGVK…LDEEDEKEIE (236 aa). ATP contacts are provided by residues Lys-46, 53 to 55, Glu-99, Cys-102, and Glu-107; that span reads GRG. Mg(2+) is bound by residues Asn-199 and Asp-213. Residues Asn-264 and 321-323 each bind substrate; that span reads GIM.

The protein belongs to the succinate/malate CoA ligase beta subunit family. In terms of assembly, heterotetramer of two alpha and two beta subunits. Mg(2+) serves as cofactor.

It catalyses the reaction succinate + ATP + CoA = succinyl-CoA + ADP + phosphate. The catalysed reaction is GTP + succinate + CoA = succinyl-CoA + GDP + phosphate. The protein operates within carbohydrate metabolism; tricarboxylic acid cycle; succinate from succinyl-CoA (ligase route): step 1/1. Functionally, succinyl-CoA synthetase functions in the citric acid cycle (TCA), coupling the hydrolysis of succinyl-CoA to the synthesis of either ATP or GTP and thus represents the only step of substrate-level phosphorylation in the TCA. The beta subunit provides nucleotide specificity of the enzyme and binds the substrate succinate, while the binding sites for coenzyme A and phosphate are found in the alpha subunit. The chain is Succinate--CoA ligase [ADP-forming] subunit beta from Brevibacillus brevis (strain 47 / JCM 6285 / NBRC 100599).